A 326-amino-acid polypeptide reads, in one-letter code: Eukaryotic translation initiation factor 3 subunit I (326 aa).

WD repeat units follow at residues 8 to 47, 50 to 89, 145 to 184, 188 to 227, and 285 to 326; these read GHER…RLGT, GHQG…VIAS, MTES…KVVD, DHSA…CLKT, and GHFG…NIFE.

It belongs to the eIF-3 subunit I family. In terms of assembly, component of the eukaryotic translation initiation factor 3 (eIF-3) complex. The eIF-3 complex interacts with pix.

It is found in the cytoplasm. Component of the eukaryotic translation initiation factor 3 (eIF-3) complex, which is involved in protein synthesis of a specialized repertoire of mRNAs and, together with other initiation factors, stimulates binding of mRNA and methionyl-tRNAi to the 40S ribosome. The eIF-3 complex specifically targets and initiates translation of a subset of mRNAs involved in cell proliferation. The polypeptide is Eukaryotic translation initiation factor 3 subunit I (Drosophila erecta (Fruit fly)).